Consider the following 69-residue polypeptide: Large ribosomal subunit protein uL29 (69 aa).

The protein belongs to the universal ribosomal protein uL29 family.

The sequence is that of Large ribosomal subunit protein uL29 from Thermoanaerobacter pseudethanolicus (strain ATCC 33223 / 39E) (Clostridium thermohydrosulfuricum).